The sequence spans 574 residues: Proline--tRNA ligase (574 aa).

Belongs to the class-II aminoacyl-tRNA synthetase family. ProS type 1 subfamily. As to quaternary structure, homodimer.

It localises to the cytoplasm. The enzyme catalyses tRNA(Pro) + L-proline + ATP = L-prolyl-tRNA(Pro) + AMP + diphosphate. Its function is as follows. Catalyzes the attachment of proline to tRNA(Pro) in a two-step reaction: proline is first activated by ATP to form Pro-AMP and then transferred to the acceptor end of tRNA(Pro). As ProRS can inadvertently accommodate and process non-cognate amino acids such as alanine and cysteine, to avoid such errors it has two additional distinct editing activities against alanine. One activity is designated as 'pretransfer' editing and involves the tRNA(Pro)-independent hydrolysis of activated Ala-AMP. The other activity is designated 'posttransfer' editing and involves deacylation of mischarged Ala-tRNA(Pro). The misacylated Cys-tRNA(Pro) is not edited by ProRS. The chain is Proline--tRNA ligase from Desulfovibrio desulfuricans (strain ATCC 27774 / DSM 6949 / MB).